A 125-amino-acid polypeptide reads, in one-letter code: UPF0102 protein PSPA7_4996 (125 aa).

This sequence belongs to the UPF0102 family.

This Pseudomonas paraeruginosa (strain DSM 24068 / PA7) (Pseudomonas aeruginosa (strain PA7)) protein is UPF0102 protein PSPA7_4996.